The following is a 473-amino-acid chain: Probable glucose-6-phosphate 1-dehydrogenase C7.13c (473 aa).

Residues Arg-43, Tyr-121, and Lys-144 each contribute to the NADP(+) site. D-glucose 6-phosphate contacts are provided by residues Lys-144, 174–178, Glu-213, and Asp-232; that span reads HYTAK. Catalysis depends on His-237, which acts as the Proton acceptor. Residue Lys-331 participates in D-glucose 6-phosphate binding. Lys-341 is an NADP(+) binding site. Gln-366 contributes to the D-glucose 6-phosphate binding site.

This sequence belongs to the glucose-6-phosphate dehydrogenase family.

It localises to the cytoplasm. It carries out the reaction D-glucose 6-phosphate + NADP(+) = 6-phospho-D-glucono-1,5-lactone + NADPH + H(+). It participates in carbohydrate degradation; pentose phosphate pathway; D-ribulose 5-phosphate from D-glucose 6-phosphate (oxidative stage): step 1/3. Catalyzes the rate-limiting step of the oxidative pentose-phosphate pathway, which represents a route for the dissimilation of carbohydrates besides glycolysis. The main function of this enzyme is to provide reducing power (NADPH) and pentose phosphates for fatty acid and nucleic acid synthesis. The protein is Probable glucose-6-phosphate 1-dehydrogenase C7.13c of Schizosaccharomyces pombe (strain 972 / ATCC 24843) (Fission yeast).